Reading from the N-terminus, the 444-residue chain is MREILHIQGGQCGNQIGSKFWEVVCDEHGIDPTGQVLSESDLQLDRINVYYNEASGGRYVPRAVLMDLEPGTMDSVKTGPHGQIFRPDNFIFGQSGAGNNWAKGHYTEGAELIDSVLDVVRKEAENCECLQGFQVCHSLGGGTGSGMGTLLISKIREEYPDRMMLTFSVFPSPKVSDTVVEPYNATLSGHQLVENADECMVLDNEALYDICFRTLKLSTPSFGDLNHLISGTMSGVTCCLRFPGQLNSDLRKLAVNLIPFPRLHFFMVGFAPLTSRGSQQYRTLTVPELTQQMWDSKNMMCAADPRHGRYLTASAMFRGKMSTKEVDEQILNVQNKNSSYFVEWIPNNVKSSVCDIPPRGLSMSSTFIGNSTSIQEMFRRVSEQFTAMFRPKAFLHWYTGEGMDEMEFTEAESNMNDLVSEYQQYQDATAEEDDYDDGEGSTGD.

The GTP site is built by Gln11, Glu69, Ser138, Gly142, Thr143, Gly144, Asn204, and Asn226. Residue Glu69 participates in Mg(2+) binding. Residues 422 to 444 form a disordered region; it reads YQQYQDATAEEDDYDDGEGSTGD. Residues 429–444 show a composition bias toward acidic residues; it reads TAEEDDYDDGEGSTGD.

The protein belongs to the tubulin family. As to quaternary structure, dimer of alpha and beta chains. A typical microtubule is a hollow water-filled tube with an outer diameter of 25 nm and an inner diameter of 15 nM. Alpha-beta heterodimers associate head-to-tail to form protofilaments running lengthwise along the microtubule wall with the beta-tubulin subunit facing the microtubule plus end conferring a structural polarity. Microtubules usually have 13 protofilaments but different protofilament numbers can be found in some organisms and specialized cells. Requires Mg(2+) as cofactor. Found in areas of rapidly dividing tissues.

It localises to the cytoplasm. The protein resides in the cytoskeleton. Tubulin is the major constituent of microtubules, a cylinder consisting of laterally associated linear protofilaments composed of alpha- and beta-tubulin heterodimers. Microtubules grow by the addition of GTP-tubulin dimers to the microtubule end, where a stabilizing cap forms. Below the cap, tubulin dimers are in GDP-bound state, owing to GTPase activity of alpha-tubulin. The chain is Tubulin beta-2 chain (TUBB2) from Daucus carota (Wild carrot).